Reading from the N-terminus, the 283-residue chain is Bifunctional protein FolD 2 (283 aa).

NADP(+)-binding positions include 165–167 (GRG), threonine 192, and valine 233.

Belongs to the tetrahydrofolate dehydrogenase/cyclohydrolase family. In terms of assembly, homodimer.

The catalysed reaction is (6R)-5,10-methylene-5,6,7,8-tetrahydrofolate + NADP(+) = (6R)-5,10-methenyltetrahydrofolate + NADPH. The enzyme catalyses (6R)-5,10-methenyltetrahydrofolate + H2O = (6R)-10-formyltetrahydrofolate + H(+). It functions in the pathway one-carbon metabolism; tetrahydrofolate interconversion. Catalyzes the oxidation of 5,10-methylenetetrahydrofolate to 5,10-methenyltetrahydrofolate and then the hydrolysis of 5,10-methenyltetrahydrofolate to 10-formyltetrahydrofolate. The protein is Bifunctional protein FolD 2 of Saccharopolyspora erythraea (strain ATCC 11635 / DSM 40517 / JCM 4748 / NBRC 13426 / NCIMB 8594 / NRRL 2338).